The primary structure comprises 435 residues: Xylose isomerase (435 aa).

Active-site residues include His-99 and Asp-102. Mg(2+)-binding residues include Glu-230, Glu-266, His-269, Asp-294, Asp-305, Asp-307, and Asp-337.

Belongs to the xylose isomerase family. As to quaternary structure, homotetramer. The cofactor is Mg(2+).

The protein localises to the cytoplasm. The catalysed reaction is alpha-D-xylose = alpha-D-xylulofuranose. The protein is Xylose isomerase of Enterococcus faecalis (strain ATCC 700802 / V583).